We begin with the raw amino-acid sequence, 465 residues long: Cysteine--tRNA ligase (465 aa).

Cys30 is a binding site for Zn(2+). The short motif at 32–42 (ITVYDYCHIGH) is the 'HIGH' region element. Cys214, His239, and Glu243 together coordinate Zn(2+). Residues 271–275 (KMSKS) carry the 'KMSKS' region motif. Lys274 contributes to the ATP binding site.

This sequence belongs to the class-I aminoacyl-tRNA synthetase family. Monomer. Requires Zn(2+) as cofactor.

Its subcellular location is the cytoplasm. It carries out the reaction tRNA(Cys) + L-cysteine + ATP = L-cysteinyl-tRNA(Cys) + AMP + diphosphate. The protein is Cysteine--tRNA ligase of Burkholderia thailandensis (strain ATCC 700388 / DSM 13276 / CCUG 48851 / CIP 106301 / E264).